Reading from the N-terminus, the 194-residue chain is Mitochondrial import inner membrane translocase subunit Tim22 (194 aa).

Intrachain disulfides connect Cys-69–Cys-141 and Cys-160–Cys-179. The next 3 membrane-spanning stretches (helical) occupy residues 74–94 (ALACVGGFVLGGAFGVFTAGI), 123–143 (MSYAKNFAIVGAMFSCTECLI), and 170–190 (AGLKAGAIGCGGFAAFSAAID).

Belongs to the Tim17/Tim22/Tim23 family. As to quaternary structure, component of the TIM22 complex, whose core is composed of TIMM22, associated with peripheral protein FXC1/TIMM10B and the 70 kDa heterohexamer. In most cases, the 70 kDa complex is composed of TIMM9 and TIMM10 (TIMM10A or TIMM10B). A small fraction of the 70 kDa complex is composed of TIMM8 (TIMM8A/DDP1 or TIMM8B/DDP2) and TIMM13. The TIM22 complex also contains AGK and TIMM29. Interacts directly with TIMM9, TIMM10A and FXC1/TIMM10B. Interacts (when oxidized) with TIMM29; interaction is direct. Disulfide bonds promote efficient assembly of the TIM22 complex.

It is found in the mitochondrion inner membrane. Its function is as follows. Essential core component of the TIM22 complex, a complex that mediates the import and insertion of multi-pass transmembrane proteins into the mitochondrial inner membrane. In the TIM22 complex, it constitutes the voltage-activated and signal-gated channel. Forms a twin-pore translocase that uses the membrane potential as external driving force in 2 voltage-dependent steps. This is Mitochondrial import inner membrane translocase subunit Tim22 (TIMM22) from Homo sapiens (Human).